The chain runs to 218 residues: Large ribosomal subunit protein bL25 (218 aa).

Residues 185–218 form a disordered region; it reads ARAAEEEAPAAEETTAEPELVRERREPRAEEEEE. Over residues 190 to 200 the composition is skewed to acidic residues; it reads EEAPAAEETTA. A compositionally biased stretch (basic and acidic residues) spans 203 to 212; that stretch reads ELVRERREPR.

Belongs to the bacterial ribosomal protein bL25 family. CTC subfamily. As to quaternary structure, part of the 50S ribosomal subunit; part of the 5S rRNA/L5/L18/L25 subcomplex. Contacts the 5S rRNA. Binds to the 5S rRNA independently of L5 and L18.

In terms of biological role, this is one of the proteins that binds to the 5S RNA in the ribosome where it forms part of the central protuberance. The sequence is that of Large ribosomal subunit protein bL25 from Roseiflexus castenholzii (strain DSM 13941 / HLO8).